The sequence spans 347 residues: MAIDEDKQKAISLAIKQIDKIFGKGALVRLGDKQVEKIDSISTGSLGLDLALGIGGVPKGRIIEIYGPESSGKTTLSLHIIAECQKNGGVCAFIDAEHALDVHYAKRLGVDTENLLVSQPDTGEQALEILETITRSGGIDLVVVDSVAALTPKAEIDGDMGDQHVGLQARLMSHALRKITGVLHKMNTTLIFINQIRMKIGMMGYGSPETTTGGNALKFYASVRIDIRRIAALKQNEQHIGNRAKAKVVKNKVAPPFREAEFDIMFGEGISKEGEIIDYGVKLDIVDKSGAWLSYQDKKLGQGRENAKALLKEDKALANEITLKIKESIGSNEEIMPLPDEPLEEME.

67–74 (GPESSGKT) contacts ATP.

Belongs to the RecA family.

Its subcellular location is the cytoplasm. In terms of biological role, can catalyze the hydrolysis of ATP in the presence of single-stranded DNA, the ATP-dependent uptake of single-stranded DNA by duplex DNA, and the ATP-dependent hybridization of homologous single-stranded DNAs. It interacts with LexA causing its activation and leading to its autocatalytic cleavage. This Helicobacter pylori (strain Shi470) protein is Protein RecA.